Here is a 303-residue protein sequence, read N- to C-terminus: Bifunctional protein FolD 2 (303 aa).

NADP(+) is bound by residues 169 to 171 (GRS), Ser194, and Ile235.

It belongs to the tetrahydrofolate dehydrogenase/cyclohydrolase family. In terms of assembly, homodimer.

It carries out the reaction (6R)-5,10-methylene-5,6,7,8-tetrahydrofolate + NADP(+) = (6R)-5,10-methenyltetrahydrofolate + NADPH. The catalysed reaction is (6R)-5,10-methenyltetrahydrofolate + H2O = (6R)-10-formyltetrahydrofolate + H(+). The protein operates within one-carbon metabolism; tetrahydrofolate interconversion. In terms of biological role, catalyzes the oxidation of 5,10-methylenetetrahydrofolate to 5,10-methenyltetrahydrofolate and then the hydrolysis of 5,10-methenyltetrahydrofolate to 10-formyltetrahydrofolate. The polypeptide is Bifunctional protein FolD 2 (Pseudomonas putida (strain GB-1)).